Consider the following 776-residue polypeptide: MTETTALASSTASSQPSSQASSQVLSLDLIITCADGLEAPLQTELTSFGIASEIKSTGRLAVTGTLRDLYKICLWSRVASRVLMLIKRKNINAEYDVAEQLYGLAKSVNWTEQFSLEQTFAIRLSVDKRVAVSQQFAMLRIKDAIADTFNEVYESRPNVDSKNPDFSVFATVNDKQAELYLDLSGTSLHRRGYRVAMTEAPLKENLAAALLYSAGWHKKNEAGDTPFYNALIDPMCGSGTFIIEALLMHCDYAVGIDKAANQFGFYEWQHHDAALWQEMIDDAQTRFRAALEIANEQPDTLPLIFGFDADNGAIIATEKNLIAAGLQDLLPLLDIETRALDQLSTLLKPLVADGRLSNPLIITNPPYGERLGDEEMIKPLYQSIGLILQDSFAGSGIDPMLGILASHVEQVDILPIREPKTLRCHNGAITVYFRYGTLIAGQTGNLVSRFEKREIEVEDGQDFINRLQKNLTRLKKLAKKDNVSNIRVYNADLPDFKVAIDLYGDYAHVQEYAPPKTIPPETAKKRFNLALMGIREVFGINREQIFIKTRARQSGNDQYSKQGNTEKRGKFYIAREDGAYLYVNFTDYLDTGLFIDHRNMRARIKDNSRNKSVLNLFAYTCTASVHAALAGAKKVTSVDLSQNYLDWGKQNFALNGLNVSSNKYQFVAADIFEWIKDNTEQFDIIFIDPPTFSNSKKFQGTFDVQRDHAALINRAMNRLTADGILYFSNNFTRFELDEQLTERYDIIDITQKTIGFDFDIKKPIHQSFEIRHRQSL.

One can recognise a THUMP domain in the interval 68 to 183; it reads DLYKICLWSR…DKQAELYLDL (116 aa).

It belongs to the methyltransferase superfamily. RlmKL family.

Its subcellular location is the cytoplasm. It catalyses the reaction guanosine(2445) in 23S rRNA + S-adenosyl-L-methionine = N(2)-methylguanosine(2445) in 23S rRNA + S-adenosyl-L-homocysteine + H(+). It carries out the reaction guanosine(2069) in 23S rRNA + S-adenosyl-L-methionine = N(2)-methylguanosine(2069) in 23S rRNA + S-adenosyl-L-homocysteine + H(+). Its function is as follows. Specifically methylates the guanine in position 2445 (m2G2445) and the guanine in position 2069 (m7G2069) of 23S rRNA. The chain is Ribosomal RNA large subunit methyltransferase K/L from Psychrobacter cryohalolentis (strain ATCC BAA-1226 / DSM 17306 / VKM B-2378 / K5).